Consider the following 156-residue polypeptide: MKGSVRALCAFLGVGALGSALCVSCTTVCPHAGKAKAEKVECALKGGIFRGTLPAADCPGIDTTVTFNADGTAQKVELALEKKSAPSPLTYRGTWMVREDGIVELSLVSSEQSKAPHEKELYELIDSNSVRYMGAPGAGKPSKEMAPFYVLKKTKK.

A signal peptide spans 1 to 21 (MKGSVRALCAFLGVGALGSAL). Cys-22 carries the N-palmitoyl cysteine lipid modification. Cys-22 is lipidated: S-diacylglycerol cysteine.

The protein localises to the cell membrane. The sequence is that of 17 kDa lipoprotein (tpp17) from Treponema pallidum (strain Nichols).